A 142-amino-acid chain; its full sequence is Mitochondrial import receptor subunit TOM22 homolog (142 aa).

Residues Met1–Glu18 show a composition bias toward low complexity. The segment at Met1–Asp41 is disordered. Position 2 is an N-acetylalanine (Ala2). Residues Ala2–Ala83 lie on the Cytoplasmic side of the membrane. Residue Ser15 is modified to Phosphoserine. Residues Lys27 to Asp41 are compositionally biased toward acidic residues. The import sequence; necessary for mitochondrion outer membrane localization and integration in the TOM complex stretch occupies residues Asp41–Gly50. Thr43 carries the phosphothreonine modification. Position 45 is a phosphoserine (Ser45). Residues Ala83 to Thr103 form a TMD; necessary for mitochondrion outer membrane localization and integration in the TOM complex region. Residues Ala84 to Thr103 form a helical membrane-spanning segment. At Glu104–Met142 the chain is on the mitochondrial intermembrane side. Residues Pro123–Met142 are C-tail signal; necessary for mitochondrion outer membrane localization and integration in the TOM complex.

The protein belongs to the Tom22 family. Forms part of the preprotein translocase complex of the outer mitochondrial membrane (TOM complex) which consists of at least 7 different proteins (TOMM5, TOMM6, TOMM7, TOMM20, TOMM22, TOMM40 and TOMM70). Interacts with PPP2R2B and TOMM40.

Its subcellular location is the mitochondrion outer membrane. Functionally, central receptor component of the translocase of the outer membrane of mitochondria (TOM complex) responsible for the recognition and translocation of cytosolically synthesized mitochondrial preproteins. Together with the peripheral receptor TOM20 functions as the transit peptide receptor and facilitates the movement of preproteins into the translocation pore. Required for the translocation across the mitochondrial outer membrane of cytochrome P450 monooxygenases. The protein is Mitochondrial import receptor subunit TOM22 homolog (Tomm22) of Mus musculus (Mouse).